We begin with the raw amino-acid sequence, 413 residues long: Peptidase T (413 aa).

His-82 serves as a coordination point for Zn(2+). The active site involves Asp-84. A Zn(2+)-binding site is contributed by Asp-144. Glu-178 acts as the Proton acceptor in catalysis. 3 residues coordinate Zn(2+): Glu-179, Asp-201, and His-383.

The protein belongs to the peptidase M20B family. Homotrimer. Zn(2+) is required as a cofactor.

The protein resides in the cytoplasm. It catalyses the reaction Release of the N-terminal residue from a tripeptide.. With respect to regulation, totally inhibited by EDTA, EGTA, and 1,10-phenanthroline. Strongly inhibited by divalent cations such as Cu(2+), Cd(2+), Co(2+) and Mn(2+). Partially inhibited by the reducing agents 2-mercaptoethanol and dithiothreitol. Its function is as follows. Cleaves the N-terminal amino acid of tripeptides. Shows broad substrate specificity, exhibiting maximum activity against hydrophobic tripeptides, with the highest activity for Met-Gly-Gly. Therefore this enzyme may play an important role in flavor formation during cheese ripening. Is also able to slowly hydrolyze some hydrophobic dipeptides, but displays no activity against tetrapeptides and the tripeptide Phe-Gly-Gly. This is Peptidase T (pepT) from Lactobacillus helveticus (Lactobacillus suntoryeus).